Consider the following 309-residue polypeptide: Gamma-hemolysin component A (309 aa).

The N-terminal stretch at 1 to 29 (MIKNKILTATLAVGLIAPLANPFIEISKA) is a signal peptide.

This sequence belongs to the aerolysin family. Toxicity requires sequential binding and synergistic association of a class S and a class F component which form heterooligomeric complexes. HlgA (class S) associates with HlgB (class F) thus forming an AB toxin in strains producing both gamma-hemolysins and leukocidins. HlgA and LukF-PV can also form a complex.

The protein resides in the secreted. Toxin that seems to act by forming pores in the membrane of the cell. Has a hemolytic and a leucotoxic activity. The polypeptide is Gamma-hemolysin component A (hlgA) (Staphylococcus aureus (strain COL)).